The primary structure comprises 286 residues: Sulfur carrier protein FdhD (286 aa).

C110 functions as the Cysteine persulfide intermediate in the catalytic mechanism. 247–252 (FARGEK) is a binding site for Mo-bis(molybdopterin guanine dinucleotide).

Belongs to the FdhD family.

The protein resides in the cytoplasm. Its function is as follows. Required for formate dehydrogenase (FDH) activity. Acts as a sulfur carrier protein that transfers sulfur from IscS to the molybdenum cofactor prior to its insertion into FDH. This chain is Sulfur carrier protein FdhD, found in Wolinella succinogenes (strain ATCC 29543 / DSM 1740 / CCUG 13145 / JCM 31913 / LMG 7466 / NCTC 11488 / FDC 602W) (Vibrio succinogenes).